Consider the following 99-residue polypeptide: UPF0045 protein MTH_1187 (99 aa).

Belongs to the UPF0045 family. In terms of assembly, homotetramer.

In Methanothermobacter thermautotrophicus (strain ATCC 29096 / DSM 1053 / JCM 10044 / NBRC 100330 / Delta H) (Methanobacterium thermoautotrophicum), this protein is UPF0045 protein MTH_1187.